The following is a 183-amino-acid chain: Translation initiation factor IF-3 (183 aa).

This sequence belongs to the IF-3 family. As to quaternary structure, monomer.

It is found in the cytoplasm. Functionally, IF-3 binds to the 30S ribosomal subunit and shifts the equilibrium between 70S ribosomes and their 50S and 30S subunits in favor of the free subunits, thus enhancing the availability of 30S subunits on which protein synthesis initiation begins. This chain is Translation initiation factor IF-3, found in Pseudomonas putida (strain W619).